The primary structure comprises 156 residues: D-aminoacyl-tRNA deacylase (156 aa).

A Gly-cisPro motif, important for rejection of L-amino acids motif is present at residues 137–138 (GP).

Belongs to the DTD family. As to quaternary structure, homodimer.

Its subcellular location is the cytoplasm. It carries out the reaction glycyl-tRNA(Ala) + H2O = tRNA(Ala) + glycine + H(+). The catalysed reaction is a D-aminoacyl-tRNA + H2O = a tRNA + a D-alpha-amino acid + H(+). Functionally, an aminoacyl-tRNA editing enzyme that deacylates mischarged D-aminoacyl-tRNAs. Also deacylates mischarged glycyl-tRNA(Ala), protecting cells against glycine mischarging by AlaRS. Acts via tRNA-based rather than protein-based catalysis; rejects L-amino acids rather than detecting D-amino acids in the active site. By recycling D-aminoacyl-tRNA to D-amino acids and free tRNA molecules, this enzyme counteracts the toxicity associated with the formation of D-aminoacyl-tRNA entities in vivo and helps enforce protein L-homochirality. The protein is D-aminoacyl-tRNA deacylase of Ruegeria sp. (strain TM1040) (Silicibacter sp.).